Here is a 409-residue protein sequence, read N- to C-terminus: Sulfide-quinone reductase (409 aa).

Residues 8–12 (GGRFG), 34–35 (NK), and Cys129 contribute to the FAD site. Residue Cys178 is the Cysteine persulfide intermediate of the active site. FAD-binding residues include Asn271, Asp307, and Gly317. Catalysis depends on Cys350, which acts as the Cysteine persulfide intermediate.

This sequence belongs to the SQRD family. Monomer. FAD serves as cofactor.

Its subcellular location is the membrane. It carries out the reaction n a quinone + n hydrogen sulfide + n H(+) = polysulfur(n-2) + n a quinol. Inhibited by the quinone analog 2-heptyl-4-hydroxyquinolone N-oxide (HQNO). Inactivated by iodoacetamide treatment. Inhibited by KCN. Functionally, catalyzes the oxidation of sulfides, such as hydrogen sulfide, with the help of a quinone. Has the highest activity with caldariella quinone and decylubiquinone, and lower activity with naphtoquinones. Consecutive reaction cycles lead to the accumulation of a polysulfide product on the active site Cys residues; these products are released when they exceed a critical length, typically as cyclooctasulfur. The sequence is that of Sulfide-quinone reductase from Acidianus ambivalens (Desulfurolobus ambivalens).